A 344-amino-acid chain; its full sequence is Fe-S cluster assembly protein DRE2 (344 aa).

The segment at 1 to 160 (MTSNILLLLH…KKLNNDNAST (160 aa)) is N-terminal SAM-like domain. Residues 154–179 (NNDNASTPGLTDSSAGTSEDETATVS) form a disordered region. Polar residues predominate over residues 155–170 (NDNASTPGLTDSSAGT). The tract at residues 161–223 (PGLTDSSAGT…NDLIAESNKY (63 aa)) is linker. 4 residues coordinate [2Fe-2S] cluster: C231, C243, C246, and C248. Residues 231-248 (CELPNGKKRKKACKDCTC) are fe-S binding site A. 4 residues coordinate [4Fe-4S] cluster: C313, C316, C324, and C327. 2 short sequence motifs (cx2C motif) span residues 313-316 (CGSC) and 324-327 (CDGC). Positions 313–327 (CGSCSLGDAFRCDGC) are fe-S binding site B.

Belongs to the anamorsin family. As to quaternary structure, monomer. Interacts with TAH18. Interacts with MIA40. It depends on [2Fe-2S] cluster as a cofactor. [4Fe-4S] cluster serves as cofactor.

Its subcellular location is the cytoplasm. The protein resides in the mitochondrion intermembrane space. In terms of biological role, component of the cytosolic iron-sulfur (Fe-S) protein assembly (CIA) machinery required for the maturation of extramitochondrial Fe-S proteins. Part of an electron transfer chain functioning in an early step of cytosolic Fe-S biogenesis, facilitating the de novo assembly of a [4Fe-4S] cluster on the scaffold complex CFD1-NBP35. Electrons are transferred to DRE2 from NADPH via the FAD- and FMN-containing protein TAH18. TAH18-DRE2 are also required for the assembly of the diferric tyrosyl radical cofactor of ribonucleotide reductase (RNR), probably by providing electrons for reduction during radical cofactor maturation in the catalytic small subunit RNR2. The chain is Fe-S cluster assembly protein DRE2 from Candida tropicalis (strain ATCC MYA-3404 / T1) (Yeast).